The following is a 211-amino-acid chain: MKYQLDTREARVIGCMLEKQITTPDQYPMSLNGITTACNQKTNREPVMELSESEVQQTLDLLVKKHFLRTLSGFGNRVVKYEHRFCNSEFGDLKLSPAEVALVTTLLLRGPQTPGELRTRAARLYEFSDVSEAESTLEQLQQRDDGPFVVRLAREAGKRESRYRHLFSGDASDAAPEEEGAGDNSHQLTERVETLEKEVAELKRQLAALLA.

The disordered stretch occupies residues 168–188 (SGDASDAAPEEEGAGDNSHQL).

This sequence belongs to the UPF0502 family.

This Pectobacterium carotovorum subsp. carotovorum (strain PC1) protein is UPF0502 protein PC1_1804.